Reading from the N-terminus, the 485-residue chain is Mitochondrial metalloendopeptidase OMA1 (485 aa).

The transit peptide at 1–16 directs the protein to the mitochondrion; the sequence is MKPSLKRRLLLLSRKF. Residues 17–147 are Mitochondrial matrix-facing; the sequence is AKASIRKLLR…GPGRWFQNPR (131 aa). Residues 148-168 form a helical membrane-spanning segment; sequence TVFTVVLVGSVGLITLIVGNT. Residues 169 to 485 lie on the Mitochondrial intermembrane side of the membrane; that stretch reads ETIPYTKRTH…AGRTGVEGFL (317 aa). Histidine 352 contacts Zn(2+). Glutamate 353 is an active-site residue. Residues histidine 356 and glutamate 405 each coordinate Zn(2+). Positions 456–485 are required for protease activation; it reads KLLAQANVMEEALMIYREVQAGRTGVEGFL.

This sequence belongs to the peptidase M48A family. Homooligomer. It depends on Zn(2+) as a cofactor.

It localises to the mitochondrion inner membrane. Functionally, protease that is part of the quality control system in the inner membrane of mitochondria. Metalloendopeptidase that modulates the oxidative phosphorylation (OXPHOS) system and plant growth. Involved in tolerance mechanisms to heat, osmotic and oxidative stresses. This is Mitochondrial metalloendopeptidase OMA1 from Arabidopsis thaliana (Mouse-ear cress).